Here is an 819-residue protein sequence, read N- to C-terminus: Disintegrin and metalloproteinase domain-containing protein 9 (819 aa).

The first 28 residues, 1-28, serve as a signal peptide directing secretion; it reads MGSGARFPSGTLRVRWLLLLGLVGPVLG. Over 29-697 the chain is Extracellular; sequence AARPGFQQTS…YNEMNTALRD (669 aa). 4 N-linked (GlcNAc...) asparagine glycosylation sites follow: Asn-125, Asn-144, Asn-154, and Asn-231. The 195-residue stretch at 212–406 folds into the Peptidase M12B domain; the sequence is RYVELFIVVD…KGGNCLLNIP (195 aa). Intrachain disulfides connect Cys-322/Cys-401, Cys-363/Cys-385, Cys-365/Cys-370, Cys-473/Cys-493, Cys-644/Cys-656, Cys-650/Cys-662, and Cys-664/Cys-673. Position 347 (His-347) interacts with Zn(2+). Glu-348 is a catalytic residue. Zn(2+) is bound by residues His-351 and His-357. N-linked (GlcNAc...) asparagine glycosylation is found at Asn-381 and Asn-487. Residues 414-501 enclose the Disintegrin domain; it reads APSCGNKLVD…FCQPDVFIQN (88 aa). Residues 644–698 form the EGF-like domain; sequence CDVQKKCHGHGVCNSNKNCHCENGWAPPNCETKGYGGSVDSGPTYNEMNTALRDG. The chain crosses the membrane as a helical span at residues 698–718; the sequence is GLLVFFFLIVPLIVCAIFIFI. The Cytoplasmic portion of the chain corresponds to 719–819; sequence KRDQLWRSYF…PAPPLYSSLT (101 aa). Disordered regions lie at residues 734 to 763 and 780 to 819; these read QTYE…VTPP and AKQP…SSLT. Over residues 735 to 750 the composition is skewed to polar residues; that stretch reads TYESDGKNQANPSRQP. Position 758 is a phosphoserine (Ser-758). Residue Thr-761 is modified to Phosphothreonine.

In terms of assembly, interacts with SH3GL2 and SNX9 through its cytoplasmic tail. Interacts with ITGA6. Zn(2+) serves as cofactor. Post-translationally, proteolytically cleaved in the trans-Golgi network before it reaches the plasma membrane to generate a mature protein. The removal of the pro-domain occurs via cleavage at two different sites. Processed most likely by a pro-protein convertase such as furin, at the boundary between the pro-domain and the catalytic domain. An additional upstream cleavage pro-protein convertase site (Arg-56/Glu-57) has an important role in the activation of ADAM9. In terms of processing, phosphorylation is induced in vitro by phorbol-12-myristate-13-acetate (PMA). In terms of tissue distribution, widely expressed. Expressed in chondrocytes. Isoform 2 is highly expressed in liver and heart.

It localises to the cell membrane. The protein resides in the secreted. Its activity is regulated as follows. Synthesized as an inactive form which is proteolytically cleaved to generate an active enzyme. Processing at the upstream site is particularly important for activation of the proenzyme, whereas processing at the boundary between the pro-domain and the catalytic domain does not appear to be essential. Inhibited by hydroxamic acid-based inhibitors. In terms of biological role, metalloprotease that cleaves and releases a number of molecules with important roles in tumorigenesis and angiogenesis, such as TEK, KDR, EPHB4, CD40, VCAM1 and CDH5. May mediate cell-cell, cell-matrix interactions and regulate the motility of cells via interactions with integrins. May act as alpha-secretase for amyloid precursor protein (APP). In Homo sapiens (Human), this protein is Disintegrin and metalloproteinase domain-containing protein 9 (ADAM9).